Here is a 1026-residue protein sequence, read N- to C-terminus: Multidrug resistance protein MdtC (1026 aa).

12 helical membrane-spanning segments follow: residues 12–32 (VATL…FRLL), 333–353 (EVEQ…FLFL), 360–380 (AIPA…MYLC), 387–407 (LSLM…IVVL), 431–451 (VGFT…PLLL), 463–483 (FAVT…TLTP), 528–548 (WVLL…ISIP), 853–873 (LLLI…LYES), 875–895 (VHPL…LLAL), 897–917 (WFGA…IGIV), 953–973 (PIMM…LTSG), and 984–1004 (ITIV…TPVV).

Belongs to the resistance-nodulation-cell division (RND) (TC 2.A.6) family. MdtC subfamily. In terms of assembly, part of a tripartite efflux system composed of MdtA, MdtB and MdtC. MdtC forms a heteromultimer with MdtB.

It is found in the cell inner membrane. This chain is Multidrug resistance protein MdtC, found in Pectobacterium carotovorum subsp. carotovorum (strain PC1).